A 131-amino-acid chain; its full sequence is Profilin (131 aa).

Belongs to the profilin family. Occurs in many kinds of cells as a complex with monomeric actin in a 1:1 ratio.

It is found in the cytoplasm. The protein resides in the cytoskeleton. Binds to actin and affects the structure of the cytoskeleton. At high concentrations, profilin prevents the polymerization of actin, whereas it enhances it at low concentrations. By binding to PIP2, it inhibits the formation of IP3 and DG. This chain is Profilin, found in Cucumis melo (Muskmelon).